We begin with the raw amino-acid sequence, 606 residues long: MNPFASLTLTTLIILTIPIMMSNSNIYKTNLYPNYVKTTVSYAFTLSLVPLLMFMHTGQEMIISNWHWMTLQTVELSLSFKMDYFSVMFIPVALFVTWSIMEFSMWYMHSDPFINRFFKYLVLFLITMMILVTANNLFQLFIGWEGVGIMSFLLIGWWHGRTDANTAALQAILYNRIGDIGFVLSMAWFLTHSNAWDLQQIFMLNNECPNMPLIGLLLAAAGKSAQFGLHPWLPSAMEGPTPVSALLHSSTMVVAGVFLLIRFYPLMETNKLVQTMTLCLGAITTLFTALCAITQNDIKKIVAFSTSSQLGLMMVTIGINQPHLAFLHICMHAFFKAMLFMCSGSIIHSLNDEQDIRKMGGLYKAMPFTTTALIIGSLALTGMPYLTGFYSKDLIIEAVNMSYTNAWALLMTLIATSLTAAYSTRIIFFAFLGKPRFPPLVLINENNPLLINSIKRLLIGSIFAGFIISNNIPPMTVPNTTMPLYMKMTALIVTIMGFMLALELNNTTYYLKFKYPSQTYKFSNMLGYYPSIMHRLPTYHNLSMSQKSASSLLDLIWLETILPKTTSFIQMKMSIMVSNQKGLIKLYFLSFLITIMISMTLFNYHE.

16 helical membrane-spanning segments follow: residues 1–21, 43–63, 87–107, 112–132, 137–157, 171–191, 213–233, 241–261, 273–293, 301–321, 324–344, 366–386, 407–429, 457–477, 482–502, and 582–602; these read MNPF…PIMM, AFTL…EMII, VMFI…SMWY, PFIN…MILV, LFQL…LIGW, AILY…WFLT, LIGL…HPWL, TPVS…FLLI, VQTM…LCAI, IVAF…GINQ, LAFL…MCSG, MPFT…MPYL, WALL…IIFF, LLIG…PMTV, MPLY…MLAL, and GLIK…MTLF.

The protein belongs to the complex I subunit 5 family. Core subunit of respiratory chain NADH dehydrogenase (Complex I) which is composed of 45 different subunits.

It localises to the mitochondrion inner membrane. The catalysed reaction is a ubiquinone + NADH + 5 H(+)(in) = a ubiquinol + NAD(+) + 4 H(+)(out). Functionally, core subunit of the mitochondrial membrane respiratory chain NADH dehydrogenase (Complex I) which catalyzes electron transfer from NADH through the respiratory chain, using ubiquinone as an electron acceptor. Essential for the catalytic activity and assembly of complex I. In Sus scrofa (Pig), this protein is NADH-ubiquinone oxidoreductase chain 5 (MT-ND5).